The primary structure comprises 247 residues: Carboxy-S-adenosyl-L-methionine synthase (247 aa).

Residues Tyr-39, 64–66 (GCS), 89–90 (DN), 117–118 (DI), Asn-132, and Arg-199 contribute to the S-adenosyl-L-methionine site.

This sequence belongs to the class I-like SAM-binding methyltransferase superfamily. Cx-SAM synthase family. As to quaternary structure, homodimer.

The catalysed reaction is prephenate + S-adenosyl-L-methionine = carboxy-S-adenosyl-L-methionine + 3-phenylpyruvate + H2O. Its function is as follows. Catalyzes the conversion of S-adenosyl-L-methionine (SAM) to carboxy-S-adenosyl-L-methionine (Cx-SAM). This is Carboxy-S-adenosyl-L-methionine synthase from Escherichia coli O7:K1 (strain IAI39 / ExPEC).